Here is a 204-residue protein sequence, read N- to C-terminus: NAD(P)H dehydrogenase (quinone) (204 aa).

Residues 3–194 (VLIVFYSMYG…AGARYQGRHV (192 aa)) form the Flavodoxin-like domain. FMN is bound by residues 9–14 (SMYGHI) and 82–84 (TRF). Tyr-11 is a binding site for NAD(+). Trp-102 lines the substrate pocket. His-138 contributes to the FMN binding site.

This sequence belongs to the WrbA family. FMN is required as a cofactor.

The catalysed reaction is a quinone + NADH + H(+) = a quinol + NAD(+). It carries out the reaction a quinone + NADPH + H(+) = a quinol + NADP(+). The chain is NAD(P)H dehydrogenase (quinone) from Syntrophobacter fumaroxidans (strain DSM 10017 / MPOB).